A 35-amino-acid chain; its full sequence is Photosystem II reaction center protein T (35 aa).

Residues Ala3–Phe23 form a helical membrane-spanning segment.

It belongs to the PsbT family. PSII is composed of 1 copy each of membrane proteins PsbA, PsbB, PsbC, PsbD, PsbE, PsbF, PsbH, PsbI, PsbJ, PsbK, PsbL, PsbM, PsbT, PsbY, PsbZ, Psb30/Ycf12, at least 3 peripheral proteins of the oxygen-evolving complex and a large number of cofactors. It forms dimeric complexes.

It localises to the plastid. The protein localises to the chloroplast thylakoid membrane. Found at the monomer-monomer interface of the photosystem II (PS II) dimer, plays a role in assembly and dimerization of PSII. PSII is a light-driven water plastoquinone oxidoreductase, using light energy to abstract electrons from H(2)O, generating a proton gradient subsequently used for ATP formation. This Staurastrum punctulatum (Green alga) protein is Photosystem II reaction center protein T.